An 83-amino-acid chain; its full sequence is Putative beta-neurotoxin RjAa17f (83 aa).

Residues 1–18 (MKILIFIIASFMLIGVEC) form the signal peptide. An LCN-type CS-alpha/beta domain is found at 19–82 (KEGYPMGRNG…VWDFSNIKCR (64 aa)). Disulfide bonds link Cys-29/Cys-81, Cys-33/Cys-55, Cys-40/Cys-62, and Cys-44/Cys-64.

The protein belongs to the long (4 C-C) scorpion toxin superfamily. Sodium channel inhibitor family. Beta subfamily. In terms of tissue distribution, expressed by the venom gland.

The protein localises to the secreted. Its function is as follows. Beta toxins bind voltage-independently at site-4 of sodium channels (Nav) and shift the voltage of activation toward more negative potentials thereby affecting sodium channel activation and promoting spontaneous and repetitive firing. The protein is Putative beta-neurotoxin RjAa17f of Rhopalurus junceus (Caribbean blue scorpion).